Reading from the N-terminus, the 496-residue chain is Cytochrome P450 71D18 (496 aa).

The helical; Signal-anchor for type II membrane protein transmembrane segment at E2–I22 threads the bilayer. C436 is a heme binding site.

This sequence belongs to the cytochrome P450 family. Heme is required as a cofactor.

The protein resides in the endoplasmic reticulum membrane. The enzyme catalyses (4S)-limonene + reduced [NADPH--hemoprotein reductase] + O2 = (1S,5R)-carveol + oxidized [NADPH--hemoprotein reductase] + H2O + H(+). Functionally, hydroxylates (-)-(4S)-limonene to (-)-trans-carveol, a precursor of (-)-carvone. Fluorinated substrate analogs are hydroxylated with the same regio- and stereochemistry. The chain is Cytochrome P450 71D18 (CYP71D18) from Mentha gracilis (Gingermint).